We begin with the raw amino-acid sequence, 1201 residues long: HEAT repeat-containing protein 6 (1201 aa).

A disordered region spans residues 1–25; that stretch reads MAGKVTFLGSNSSFSPDGKTQGFKS. One copy of the HEAT 1 repeat lies at 182 to 221; that stretch reads PDLLGPSGVLVKYGDPKQPDIELRRSAVHCIANLCLSVPS. Positions 321-390 are disordered; that stretch reads AVKPEPAQDT…SQSSMLTSPS (70 aa). Basic residues predominate over residues 341 to 352; the sequence is QKKRKSRGKGKK. Residues 375–390 show a composition bias toward polar residues; sequence SGWSHGSQSSMLTSPS. HEAT repeat units follow at residues 460–498, 523–560, and 566–603; these read GIGG…GSRQ, SIRE…NVPY, and GLLS…TQAP. The segment covering 618-633 has biased composition (polar residues); the sequence is SSLGSGISTPQESPLS. Residues 618-653 are disordered; the sequence is SSLGSGISTPQESPLSWRQPARRDEEASSPAAAEGP.

This Danio rerio (Zebrafish) protein is HEAT repeat-containing protein 6 (heatr6).